A 350-amino-acid polypeptide reads, in one-letter code: MSHQTGIQASEDVKEIFARARNGKYRLLKISIENEQLVVGSCSPPSDSWEQDYDSFVLPLLEDKQPCYVLFRLDSQNAQGYEWIFIAWSPDHSHVRQKMLYAATRATLKKEFGGGHIKDEVFGTVKEDVSLHGYKKYLLSQSSPAPLTAAEEELRQIKINEVQTDVSVDTKHQTLQGVAFPISRDAFQALEKLSKKQLNYVQLEIDIKNETIILANTENTELRDLPKRIPKDSARYHFFLYKHSHEGDYLESVVFIYSMPGYTCSIRERMLYSSCKSPLLEIVERQLQMDVIRKIEIDNGDELTADFLYDEVHPKQHAHKQSFAKPKGPAGKRGIRRLIRGPAEAEATTD.

Residue Ser-2 is modified to N-acetylserine. Positions 2-139 constitute an ADF-H 1 domain; it reads SHQTGIQASE…SLHGYKKYLL (138 aa). Phosphoserine occurs at positions 143 and 277. In terms of domain architecture, ADF-H 2 spans 175 to 313; sequence LQGVAFPISR…TADFLYDEVH (139 aa). Tyr-309 carries the post-translational modification Phosphotyrosine. The interval 317–350 is disordered; it reads HAHKQSFAKPKGPAGKRGIRRLIRGPAEAEATTD. Phosphothreonine is present on Thr-349.

This sequence belongs to the actin-binding proteins ADF family. Twinfilin subfamily. In terms of assembly, interacts with G-actin; ADP-actin form and capping protein (CP). May also be able to interact with TWF2 and phosphoinositides, PI(4,5)P2. When bound to PI(4,5)P2, it is down-regulated. Interacts with ACTG1. Post-translationally, phosphorylated on serine and threonine residues. Widely expressed with highest levels in brain, liver and kidney. Also expressed in heart, lung and testis. Not detected in spleen or skeletal muscle.

Its subcellular location is the cytoplasm. The protein resides in the cytoskeleton. Functionally, actin-binding protein involved in motile and morphological processes. Inhibits actin polymerization, likely by sequestering G-actin. By capping the barbed ends of filaments, it also regulates motility. Seems to play an important role in clathrin-mediated endocytosis and distribution of endocytic organelles. The protein is Twinfilin-1 (Twf1) of Mus musculus (Mouse).